The following is a 153-amino-acid chain: UPF0178 protein Atu1478 (153 aa).

This sequence belongs to the UPF0178 family.

The sequence is that of UPF0178 protein Atu1478 from Agrobacterium fabrum (strain C58 / ATCC 33970) (Agrobacterium tumefaciens (strain C58)).